Consider the following 437-residue polypeptide: Transcription factor E2F2 (437 aa).

The interval 65 to 105 is cyclin A/CDK2 binding; that stretch reads ATPHGPEGQVVRCLPAGRLPAKRKLDLEGIGRPVVPEFPTP. A DNA-binding region spans residues 107–196; sequence GKCIRVDGLP…KNNIQWVGRG (90 aa). The segment at 155–176 is leucine-zipper; that stretch reads LNWAAEVLDVQKRRIYDITNVL. Positions 160-196 match the DEF box motif; that stretch reads EVLDVQKRRIYDITNVLEGIQLIRKKAKNNIQWVGRG. Residues 197–289 form a dimerization region; the sequence is MFEDPTRPGK…PDRTEDNLQI (93 aa). The tract at residues 307–368 is disordered; the sequence is VQEPDSPSEE…APPPPSLVPL (62 aa). A compositionally biased stretch (low complexity) spans 315 to 330; that stretch reads EEPLPSTSTLCPSPDS. Over residues 351-365 the composition is skewed to pro residues; that stretch reads APAPTPQQAPPPPSL. The interval 359–437 is transactivation; it reads APPPPSLVPL…SYDLGDLLIN (79 aa). The interval 410–427 is retinoblastoma protein binding; it reads DDYLWGLEAGEGISDLFD.

Belongs to the E2F/DP family. In terms of assembly, component of the DRTF1/E2F transcription factor complex. Forms heterodimers with DP family members. The E2F2 complex binds specifically hypophosphorylated retinoblastoma protein RB1. During the cell cycle, RB1 becomes phosphorylated in mid-to-late G1 phase, detaches from the DRTF1/E2F complex, rendering E2F transcriptionally active. Viral oncoproteins, notably E1A, T-antigen and HPV E7, are capable of sequestering RB1, thus releasing the active complex. Binds EAPP. Post-translationally, phosphorylated by CDK2 and cyclin A-CDK2 in the S-phase. As to expression, highest level of expression is found in placenta, low levels are found in lung. Found as well in many immortalized cell lines derived from tumor samples.

The protein localises to the nucleus. Functionally, transcription activator that binds DNA cooperatively with DP proteins through the E2 recognition site, 5'-TTTC[CG]CGC-3' found in the promoter region of a number of genes whose products are involved in cell cycle regulation or in DNA replication. The DRTF1/E2F complex functions in the control of cell-cycle progression from g1 to s phase. E2F2 binds specifically to RB1 in a cell-cycle dependent manner. In Homo sapiens (Human), this protein is Transcription factor E2F2 (E2F2).